We begin with the raw amino-acid sequence, 561 residues long: Putative transport protein YbjL (561 aa).

5 helical membrane passes run 8–28 (LLNG…LCLG), 32–52 (LGSI…LLGQ), 66–86 (FMLF…SIFF), 94–114 (MLAL…GKLF), and 158–178 (NLSL…IVGA). RCK C-terminal domains follow at residues 200–288 (RGLD…SFRN) and 292–373 (VFDR…RIGF). Helical transmembrane passes span 383–403 (LLAF…TFQF), 406–426 (FSFG…LGFM), 451–471 (VFMA…LGAI), 475–495 (MLIA…LFGA), and 540–560 (AIAN…WPGL).

This sequence belongs to the AAE transporter (TC 2.A.81) family. YbjL subfamily.

It localises to the cell membrane. The sequence is that of Putative transport protein YbjL from Escherichia coli O127:H6 (strain E2348/69 / EPEC).